We begin with the raw amino-acid sequence, 1245 residues long: ATP-dependent helicase/deoxyribonuclease subunit B (1245 aa).

Positions 737–758 (WDDQNNAPTTDLPDRPNPRASE) are disordered. Basic and acidic residues predominate over residues 748–758 (LPDRPNPRASE).

The protein belongs to the helicase family. AddB/RexB type 2 subfamily. Heterodimer of AddA and RexB. Mg(2+) serves as cofactor.

The heterodimer acts as both an ATP-dependent DNA helicase and an ATP-dependent, dual-direction single-stranded exonuclease. Recognizes the chi site generating a DNA molecule suitable for the initiation of homologous recombination. This subunit has 5' -&gt; 3' nuclease activity but not helicase activity. The polypeptide is ATP-dependent helicase/deoxyribonuclease subunit B (Limosilactobacillus fermentum (strain NBRC 3956 / LMG 18251) (Lactobacillus fermentum)).